A 322-amino-acid chain; its full sequence is Transmembrane and ubiquitin-like domain-containing protein 2 (322 aa).

Residues 38-58 (VVAGVVVLILALVLAWLSTYV) form a helical membrane-spanning segment. The tract at residues 88 to 168 (VAGQGTPEPT…VRSEDSTCLP (81 aa)) is disordered. Residues 115–130 (EGGGDPTGEPGAGGGV) are compositionally biased toward gly residues. The Ubiquitin-like domain occupies 174 to 247 (ISVRLKFFND…IHCHRSPPGS (74 aa)). The next 2 helical transmembrane spans lie at 267–287 (LGVS…GVVW) and 296–316 (FFTA…SFLV).

It is found in the membrane. The chain is Transmembrane and ubiquitin-like domain-containing protein 2 (TMUB2) from Bos taurus (Bovine).